A 156-amino-acid chain; its full sequence is MDSLHVLRSFLLLFIVFNHLPRTTTSMSEPKVITIDVNQAQKLLDSGYTFLDVRTVEEFKKGHVDSENVFNVPYWLYTPQGQEINPNFLKHVSSLCNQTDHLILGCKSGVRSLHATKFLVSSGFKTVRNMDGGYIAWVNKRFPVKVEHKELKYDEL.

Positions 44–146 (LDSGYTFLDV…WVNKRFPVKV (103 aa)) constitute a Rhodanese domain. Cysteine 106 serves as the catalytic Cysteine persulfide intermediate.

In Arabidopsis thaliana (Mouse-ear cress), this protein is Rhodanese-like domain-containing protein 17 (STR17).